Consider the following 87-residue polypeptide: Large ribosomal subunit protein bL31B (87 aa).

The protein belongs to the bacterial ribosomal protein bL31 family. Type B subfamily. Part of the 50S ribosomal subunit.

This Burkholderia ambifaria (strain MC40-6) protein is Large ribosomal subunit protein bL31B.